The sequence spans 101 residues: Replication restart protein PriB (101 aa).

Positions 1–101 (MTTNNLVLSG…IHAENVELKT (101 aa)) constitute an SSB domain.

The protein belongs to the PriB family. As to quaternary structure, homodimer. Interacts with PriA and DnaT. Component of the replication restart primosome. Primosome assembly occurs via a 'hand-off' mechanism. PriA binds to replication forks, subsequently PriB then DnaT bind; DnaT then displaces ssDNA to generate the helicase loading substrate.

Its function is as follows. Involved in the restart of stalled replication forks, which reloads the replicative helicase on sites other than the origin of replication; the PriA-PriB pathway is the major replication restart pathway. During primosome assembly it facilitates complex formation between PriA and DnaT on DNA; stabilizes PriA on DNA. Stimulates the DNA unwinding activity of PriA helicase. This chain is Replication restart protein PriB, found in Shewanella baltica (strain OS223).